We begin with the raw amino-acid sequence, 126 residues long: NQFDILLCSNLFGDIISDECAVITGSIGMLPSASFNEKNFGLYEPAGGSAPDIAGKNIANPIAQILSLSMLVRYGMKLKKIADKIDKSVASALKAGYRTADISNNNSYLKTNEMGDVISDFLINGK.

The Mg(2+) site is built by D14 and D18. 48–60 contributes to the NAD(+) binding site; that stretch reads GSAPDIAGKNIAN.

This sequence belongs to the isocitrate and isopropylmalate dehydrogenases family. LeuB type 1 subfamily. Homodimer. It depends on Mg(2+) as a cofactor. Mn(2+) serves as cofactor.

Its subcellular location is the cytoplasm. It catalyses the reaction (2R,3S)-3-isopropylmalate + NAD(+) = 4-methyl-2-oxopentanoate + CO2 + NADH. It functions in the pathway amino-acid biosynthesis; L-leucine biosynthesis; L-leucine from 3-methyl-2-oxobutanoate: step 3/4. Functionally, catalyzes the oxidation of 3-carboxy-2-hydroxy-4-methylpentanoate (3-isopropylmalate) to 3-carboxy-4-methyl-2-oxopentanoate. The product decarboxylates to 4-methyl-2 oxopentanoate. This chain is 3-isopropylmalate dehydrogenase (leuB), found in Buchnera aphidicola subsp. Uroleucon rurale.